Here is an 85-residue protein sequence, read N- to C-terminus: Large ribosomal subunit protein bL31B (85 aa).

This sequence belongs to the bacterial ribosomal protein bL31 family. Type B subfamily. In terms of assembly, part of the 50S ribosomal subunit.

The protein is Large ribosomal subunit protein bL31B of Clavibacter sepedonicus (Clavibacter michiganensis subsp. sepedonicus).